The primary structure comprises 123 residues: DNA-directed RNA polymerase I subunit RPA12 (123 aa).

Positions 17, 20, 35, 38, 84, and 87 each coordinate Zn(2+). Residues 17–38 (CPDCGSVLPLPGVQDAVACTRC) form a C4-type zinc finger. The TFIIS-type zinc-finger motif lies at 80–120 (VDRRCSRCGHEGMAYHTRQMRSADEGQTVFYTCTNCKFQEK). A Hairpin motif is present at residues 103 to 104 (DE). Zn(2+) contacts are provided by C112 and C115.

It belongs to the archaeal RpoM/eukaryotic RPA12/RPB9/RPC11 RNA polymerase family. In terms of assembly, component of the RNA polymerase I (Pol I) complex consisting of at least 13 subunits.

Its subcellular location is the nucleus. The protein resides in the nucleolus. Functionally, core component of RNA polymerase I (Pol I), a DNA-dependent RNA polymerase which synthesizes ribosomal RNA precursors using the four ribonucleoside triphosphates as substrates. Can mediate Pol I proofreading of the nascent RNA transcript. Anchors into the Pol I active site to monitor transcription fidelity and cleave mis-incorporated 5'-ribonucleotides. This chain is DNA-directed RNA polymerase I subunit RPA12, found in Bos taurus (Bovine).